A 513-amino-acid chain; its full sequence is GMP synthase [glutamine-hydrolyzing] (513 aa).

In terms of domain architecture, Glutamine amidotransferase type-1 spans 9-198 (LILVLDFGSQ…VRRVCNCTGE (190 aa)). The Nucleophile role is filled by Cys-86. Residues His-172 and Glu-174 contribute to the active site. The region spanning 199–388 (WTMENFIEIE…LGIPEHLVWR (190 aa)) is the GMPS ATP-PPase domain. 226 to 232 (SGGVDSS) provides a ligand contact to ATP.

As to quaternary structure, homodimer.

The enzyme catalyses XMP + L-glutamine + ATP + H2O = GMP + L-glutamate + AMP + diphosphate + 2 H(+). The protein operates within purine metabolism; GMP biosynthesis; GMP from XMP (L-Gln route): step 1/1. Functionally, catalyzes the synthesis of GMP from XMP. The protein is GMP synthase [glutamine-hydrolyzing] of Staphylococcus epidermidis (strain ATCC 35984 / DSM 28319 / BCRC 17069 / CCUG 31568 / BM 3577 / RP62A).